We begin with the raw amino-acid sequence, 875 residues long: Serine/threonine-protein kinase D2 (875 aa).

Residues 1 to 33 (MAAAPSHPAGLPCSPGPGSPPPPGGSDLQSLPP) are disordered. The span at 14 to 24 (SPGPGSPPPPG) shows a compositional bias: pro residues. S26 and S30 each carry phosphoserine. Residue Y87 is modified to Phosphotyrosine. The Phorbol-ester/DAG-type 1 zinc finger occupies 138-188 (PHALTVHSYRAPAFCDHCGEMLFGLVRQGLKCDGCGLNYHKRCAFSIPNNC). Phosphoserine is present on residues S197, S198, S200, S203, S206, S211, S212, and S214. The interval 224-247 (RSTTDLLPRRPPSSSSSSSSSSFY) is disordered. The segment covering 236–245 (SSSSSSSSSS) has biased composition (low complexity). S244 is subject to Phosphoserine; by CSNK1D and CSNK1E. Residue S245 is modified to Phosphoserine. Residues 265–315 (PHTFLIHSYTRPTVCQACKKLLKGLFRQGLQCKDCKFNCHKRCATRVPNDC) form a Phorbol-ester/DAG-type 2 zinc finger. The PH domain maps to 398 to 510 (TTLREGWVVH…WETAIRQALM (113 aa)). Y408 is modified (phosphotyrosine). At Y439 the chain carries Phosphotyrosine; by ABL1. Phosphoserine is present on S519. In terms of domain architecture, Protein kinase spans 552 to 808 (IFPDEVLGSG…VDKSLSHPWL (257 aa)). Residues 558–566 (LGSGQFGVV) and K581 each bind ATP. D675 (proton acceptor) is an active-site residue. S707 carries the post-translational modification Phosphoserine; by PKC. Residue S711 is modified to Phosphoserine. Y718 is modified (phosphotyrosine; by ABL1). Positions 725–727 (LNQ) match the Important for ABL1-mediated Tyr-718 phosphorylation motif. A Phosphoserine; by autocatalysis modification is found at S873.

This sequence belongs to the protein kinase superfamily. CAMK Ser/Thr protein kinase family. PKD subfamily. As to quaternary structure, interacts (via C-terminus) with LCK. Interacts (via N-terminus and zing-finger domain 1 and 2) with PRKCD in response to oxidative stress; the interaction is independent of PRKD2 tyrosine phosphorylation. Mg(2+) is required as a cofactor. In terms of processing, phosphorylation of Ser-873 correlates with the activation status of the kinase. Ser-707 is probably phosphorylated by PKC. Phosphorylation at Ser-244 by CSNK1D and CSNK1E promotes nuclear localization and substrate targeting. Phosphorylation at Ser-244, Ser-707 and Ser-711 is required for nuclear localization. Phosphorylated at Tyr-438 by ABL1 in response to oxidative stress. Phosphorylated at Tyr-718 by ABL1 specifically in response to oxidative stress; requires prior phosphorylation at Ser-707 or/and Ser-711.

The protein localises to the cytoplasm. It localises to the cell membrane. Its subcellular location is the golgi apparatus. The protein resides in the trans-Golgi network. It catalyses the reaction L-seryl-[protein] + ATP = O-phospho-L-seryl-[protein] + ADP + H(+). It carries out the reaction L-threonyl-[protein] + ATP = O-phospho-L-threonyl-[protein] + ADP + H(+). Activated by DAG and phorbol esters. Phorbol-ester/DAG-type domains bind DAG, mediating translocation to membranes. Autophosphorylation of Ser-711 and phosphorylation of Ser-707 by PKC relieves auto-inhibition by the PH domain. Catalytic activity is further increased by phosphorylation at Tyr-718 in response to oxidative stress. Serine/threonine-protein kinase that converts transient diacylglycerol (DAG) signals into prolonged physiological effects downstream of PKC, and is involved in the regulation of cell proliferation via MAPK1/3 (ERK1/2) signaling, oxidative stress-induced NF-kappa-B activation, inhibition of HDAC7 transcriptional repression, signaling downstream of T-cell antigen receptor (TCR) and cytokine production, and plays a role in Golgi membrane trafficking, angiogenesis, secretory granule release and cell adhesion. May potentiate mitogenesis induced by the neuropeptide bombesin by mediating an increase in the duration of MAPK1/3 (ERK1/2) signaling, which leads to accumulation of immediate-early gene products including FOS that stimulate cell cycle progression. In response to oxidative stress, is phosphorylated at Tyr-438 and Tyr-718 by ABL1, which leads to the activation of PRKD2 without increasing its catalytic activity, and mediates activation of NF-kappa-B. In response to the activation of the gastrin receptor CCKBR, is phosphorylated at Ser-244 by CSNK1D and CSNK1E, translocates to the nucleus, phosphorylates HDAC7, leading to nuclear export of HDAC7 and inhibition of HDAC7 transcriptional repression of NR4A1/NUR77. Upon TCR stimulation, is activated independently of ZAP70, translocates from the cytoplasm to the nucleus and is required for interleukin-2 (IL2) promoter up-regulation. During adaptive immune responses, is required in peripheral T-lymphocytes for the production of the effector cytokines IL2 and IFNG after TCR engagement and for optimal induction of antibody responses to antigens. In epithelial cells stimulated with lysophosphatidic acid (LPA), is activated through a PKC-dependent pathway and mediates LPA-stimulated interleukin-8 (IL8) secretion via a NF-kappa-B-dependent pathway. During TCR-induced T-cell activation, interacts with and is activated by the tyrosine kinase LCK, which results in the activation of the NFAT transcription factors. In the trans-Golgi network (TGN), regulates the fission of transport vesicles that are on their way to the plasma membrane and in polarized cells is involved in the transport of proteins from the TGN to the basolateral membrane. Plays an important role in endothelial cell proliferation and migration prior to angiogenesis, partly through modulation of the expression of KDR/VEGFR2 and FGFR1, two key growth factor receptors involved in angiogenesis. In secretory pathway, is required for the release of chromogranin-A (CHGA)-containing secretory granules from the TGN. Downstream of PRKCA, plays important roles in angiotensin-2-induced monocyte adhesion to endothelial cells. This Rattus norvegicus (Rat) protein is Serine/threonine-protein kinase D2 (Prkd2).